The following is a 572-amino-acid chain: MPKFDVSKADLERLVGKSFTVEEWEDLFLYAKCELDDVWEENGQIYFKADSKDTNRPDLWSAEGIARQIRWALGMAKGLPRYEVEKSDVVVYVDEKLKDIRPYGVYAIVEGLSLDDEALKQMINLQEKVALTFGRRRREVAIGIFDFDKVKPPIYYRAAEKTEKFVPLGFEEKMSLEEILEKHEKGKEYGHLIKDKPYYPLLVDSEGNVLSMPPIINSELTGRVTTETRNVFVDVTGWDLNKIMLALNVVVTALAERGGKIKSVKVVYGDFEIETPNLTPKEFEVEFEYIRRLAGIDLSDEEIKELLERMFYEVELENGKAKLKYPAFRDDIMHARDVLEDVLIAYGYNEIKPEEPKLAVQGRGDKFVEFEDTVRELMVGYGLQEVMTFNLTNREAQYTKMNLDFGEHPFEEYGHHPPARLVEIENPISPKWSALRAWLIPSLMEFLSQNTHEEYPQRIFEVGKTTLINENKETKTVSESKLAVAIAHPRVTFTEVKEILDSVMHHLGLEYELKEIEHNSFIPGRVGKIIVNGQEVGIIGEIHPKVLENWGIEMPVAAFEVFLRPLYREPYL.

The B5 domain occupies 278 to 353 (LTPKEFEVEF…IAYGYNEIKP (76 aa)). Mg(2+)-binding residues include Asp331, Asp337, Glu340, and Asp341.

Belongs to the phenylalanyl-tRNA synthetase beta subunit family. Type 2 subfamily. Tetramer of two alpha and two beta subunits. The cofactor is Mg(2+).

Its subcellular location is the cytoplasm. It carries out the reaction tRNA(Phe) + L-phenylalanine + ATP = L-phenylalanyl-tRNA(Phe) + AMP + diphosphate + H(+). The chain is Phenylalanine--tRNA ligase beta subunit from Thermococcus onnurineus (strain NA1).